Reading from the N-terminus, the 264-residue chain is 3-methyl-2-oxobutanoate hydroxymethyltransferase (264 aa).

The Mg(2+) site is built by Asp-45 and Asp-84. 3-methyl-2-oxobutanoate contacts are provided by residues 45–46, Asp-84, and Lys-112; that span reads DS. Glu-114 lines the Mg(2+) pocket. Glu-181 serves as the catalytic Proton acceptor.

Belongs to the PanB family. As to quaternary structure, homodecamer; pentamer of dimers. It depends on Mg(2+) as a cofactor.

The protein resides in the cytoplasm. It catalyses the reaction 3-methyl-2-oxobutanoate + (6R)-5,10-methylene-5,6,7,8-tetrahydrofolate + H2O = 2-dehydropantoate + (6S)-5,6,7,8-tetrahydrofolate. The protein operates within cofactor biosynthesis; (R)-pantothenate biosynthesis; (R)-pantoate from 3-methyl-2-oxobutanoate: step 1/2. Its function is as follows. Catalyzes the reversible reaction in which hydroxymethyl group from 5,10-methylenetetrahydrofolate is transferred onto alpha-ketoisovalerate to form ketopantoate. The polypeptide is 3-methyl-2-oxobutanoate hydroxymethyltransferase (Shewanella halifaxensis (strain HAW-EB4)).